Reading from the N-terminus, the 793-residue chain is Netrin-B (793 aa).

The signal sequence occupies residues methionine 1–glycine 22. Positions lysine 39–alanine 303 constitute a Laminin N-terminal domain. N-linked (GlcNAc...) asparagine glycans are attached at residues asparagine 103, asparagine 125, and asparagine 298. Positions serine 332–alanine 378 are disordered. Low complexity predominate over residues proline 367–alanine 378. Disulfide bonds link cysteine 405/cysteine 414, cysteine 407/cysteine 461, cysteine 463/cysteine 472, cysteine 475/cysteine 495, cysteine 498/cysteine 507, cysteine 500/cysteine 525, cysteine 528/cysteine 537, cysteine 540/cysteine 558, cysteine 561/cysteine 573, cysteine 563/cysteine 580, cysteine 582/cysteine 591, cysteine 594/cysteine 608, cysteine 649/cysteine 738, cysteine 652/cysteine 740, and cysteine 665/cysteine 792. 3 Laminin EGF-like domains span residues cysteine 405–methionine 497, cysteine 498–arginine 560, and cysteine 561–lysine 610. Residues serine 420–histidine 446 form a disordered region. Residues aspartate 428 to threonine 437 show a composition bias toward acidic residues. Residues cysteine 649–cysteine 792 enclose the NTR domain. N-linked (GlcNAc...) asparagine glycosylation is present at asparagine 746.

In terms of assembly, binds to unc-5 and fra receptors. In terms of tissue distribution, at 24 hr after puparium formation (APF), detected in the most anterior (oldest) L3, L4 and L5 lamina neurons (at protein level). At 48 hr APF, expressed in all L3, L4 and L5 neurons with slightly higher expression in the L3 neurons (at protein level). At the midline of developing CNS and in different subsets of neurons, muscles, and epidermal patches.

Its subcellular location is the secreted. The protein resides in the extracellular space. The protein localises to the extracellular matrix. It localises to the cytoplasm. It is found in the perinuclear region. Its function is as follows. Netrins control guidance of CNS commissural axons and peripheral motor axons. Its association with either fra or unc-5 receptors will lead to axon attraction or repulsion, respectively. While short-range repulsion requires both fra and unc-5 receptors, long-range repulsion only requires unc-5. The chain is Netrin-B (NetB) from Drosophila melanogaster (Fruit fly).